The sequence spans 542 residues: Valine N-monooxygenase 1 (542 aa).

Over 1–21 (MAMNVSTTIGLLNATSFASSS) the chain is Cytoplasmic. The chain crosses the membrane as a helical; Signal-anchor for type II membrane protein span at residues 22–42 (SINTVKILFVTLFISIVSTIV). At 43–542 (KLQKSAANKE…LAPHLYPTSP (500 aa)) the chain is on the lumenal side. Asparagine 278 carries N-linked (GlcNAc...) asparagine glycosylation. Cysteine 478 provides a ligand contact to heme. The N-linked (GlcNAc...) asparagine glycan is linked to asparagine 506.

This sequence belongs to the cytochrome P450 family. Requires heme as cofactor. As to expression, expressed in the epidermis, the next two cortex cell layers, the endodermis and the pericycle of leaf petioles. Strong expression around the laticifers among the phloem cells and in parenchymatic cells between the protoxylem and the metaxylem cells. In the leaves, preferentially expressed in the mesophyll cells adjacent to the epidermis.

It is found in the microsome membrane. It carries out the reaction L-valine + 2 reduced [NADPH--hemoprotein reductase] + 2 O2 = (E)-2-methylpropanal oxime + 2 oxidized [NADPH--hemoprotein reductase] + CO2 + 3 H2O + 2 H(+). The catalysed reaction is L-valine + reduced [NADPH--hemoprotein reductase] + O2 = N-hydroxy-L-valine + oxidized [NADPH--hemoprotein reductase] + H2O + 2 H(+). The enzyme catalyses N-hydroxy-L-valine + reduced [NADPH--hemoprotein reductase] + O2 = N,N-dihydroxy-L-valine + oxidized [NADPH--hemoprotein reductase] + H2O + H(+). It catalyses the reaction L-isoleucine + 2 reduced [NADPH--hemoprotein reductase] + 2 O2 = (1E,2S)-2-methylbutanal oxime + 2 oxidized [NADPH--hemoprotein reductase] + CO2 + 3 H2O + 2 H(+). It carries out the reaction L-isoleucine + reduced [NADPH--hemoprotein reductase] + O2 = N-hydroxy-L-isoleucine + oxidized [NADPH--hemoprotein reductase] + H2O + 2 H(+). The catalysed reaction is N-hydroxy-L-isoleucine + reduced [NADPH--hemoprotein reductase] + O2 = N,N-dihydroxy-L-isoleucine + oxidized [NADPH--hemoprotein reductase] + H2O + H(+). It participates in secondary metabolite biosynthesis. With respect to regulation, inhibited by tetcyclasis but not by 1-aminobenzotriazole (ABT). Its function is as follows. Involved in the biosynthesis of the cyanogenic glucosides linamarin and lotaustralin. Can use L-valine or L-isoleucine as substrate, but not L-leucine, L-phenylalanine, L-tyrosine, D-valine or D-isoleucine. Catalyzes multi-step reactions starting with two successive N-hydroxylations using L-valine and L-isoleucine as substrates leading to the formation of N,N-dihydroxy-L-valine and N,N-dihydroxy-L-isoleucine, respectively; following spontaneous reactions lead to the production of (E)-2-methylpropanal oxime and (1E,2S)-2-methylbutanal oxime, respectively. The protein is Valine N-monooxygenase 1 of Manihot esculenta (Cassava).